Consider the following 711-residue polypeptide: BCLAF1 and THRAP3 family member 3 (711 aa).

The span at 1–15 shows a compositional bias: basic residues; sequence MARSRSRSPRWKHRS. 2 disordered regions span residues 1–42 and 48–67; these read MARS…YRKD and AWRMDSEKHGQSKPRIPSRG. 2 positions are modified to phosphoserine: Ser15 and Ser17. The segment covering 48 to 57 has biased composition (basic and acidic residues); that stretch reads AWRMDSEKHG. Ser78, Ser80, and Ser187 each carry phosphoserine. Disordered stretches follow at residues 94-350 and 371-404; these read KPHR…KDSI and EKIKKEGDCRKESNSSSNQLDKSQKLPDVKPSPI. Basic and acidic residues-rich tracts occupy residues 163-197, 204-213, 220-242, 296-311, 318-349, and 371-383; these read FRFEGKWHEDELRHQRIQEEKYSQSTRRGSEDFET, RYPEDRDFRK, RPKDVERYESREPARNPKWKPEH, SDGRTQKYCKEEDRKY, LNRELDCFNTGRGRETQDGQVKEPFKPSKKDS, and EKIKKEGDCRKES. Lys400 is covalently cross-linked (Glycyl lysine isopeptide (Lys-Gly) (interchain with G-Cter in SUMO2)). Ser402 and Ser578 each carry phosphoserine.

The protein belongs to the BCLAF1/THRAP3 family.

Its subcellular location is the mitochondrion. The sequence is that of BCLAF1 and THRAP3 family member 3 from Homo sapiens (Human).